A 1275-amino-acid chain; its full sequence is Rho1 guanine nucleotide exchange factor 3 (1275 aa).

Disordered regions lie at residues 1–42, 56–113, 131–188, and 214–248; these read MKLS…SFQK, SPPF…NSAA, NNPL…SPYS, and LSPT…VEYL. The segment covering 7-17 has biased composition (basic and acidic residues); the sequence is LFHRSSKDHGG. Polar residues-rich tracts occupy residues 32–42, 80–113, and 142–151; these read PHSSSPPSFQK, ASIN…NSAA, and SPGNKQNTVD. Composition is skewed to low complexity over residues 178–188 and 214–228; these read SSVSSHSSPYS and LSPT…SPIR. Residue Ser293 is modified to Phosphoserine. The DH domain occupies 465-657; the sequence is ARQNNIHELI…RATCEECDAV (193 aa). Residues 692 to 855 enclose the PH domain; the sequence is EFFFEGIVQR…WVEKINVAKK (164 aa). The region spanning 930–1239 is the CNH domain; that stretch reads YGDISCIAQF…KYYPSNSDWL (310 aa).

Its subcellular location is the cytoplasm. Its function is as follows. Stimulates the exchange of Rho1 GDP-bound form into GTP-bound form. Regulates, via interaction and activation of Rho1, beta-1,3-glucan biosynthesis and cell wall integrity during septation. Involved in the regulation of contractile ring assembly. The protein is Rho1 guanine nucleotide exchange factor 3 (rgf3) of Schizosaccharomyces pombe (strain 972 / ATCC 24843) (Fission yeast).